We begin with the raw amino-acid sequence, 119 residues long: Methylglyoxal synthase (119 aa).

Residues 1 to 119 (MKIALIAHDK…ESAKLIMADI (119 aa)) form the MGS-like domain. Substrate-binding positions include H8, K12, 34–37 (TGTT), and 54–55 (SG). The active-site Proton donor/acceptor is the D60. H87 is a substrate binding site.

This sequence belongs to the methylglyoxal synthase family.

The enzyme catalyses dihydroxyacetone phosphate = methylglyoxal + phosphate. Functionally, catalyzes the formation of methylglyoxal from dihydroxyacetone phosphate. This chain is Methylglyoxal synthase, found in Clostridium perfringens (strain 13 / Type A).